The following is a 114-amino-acid chain: uncharacterized protein (114 aa).

The span at 1-20 (MGLSRWHDKNSRPAEEKSEE) shows a compositional bias: basic and acidic residues. The segment at 1–22 (MGLSRWHDKNSRPAEEKSEEMQ) is disordered.

In terms of biological role, may be involved in phosphatase regulation and/or generation of precursor metabolites and energy. This is an uncharacterized protein from Saccharomyces cerevisiae (strain ATCC 204508 / S288c) (Baker's yeast).